Here is a 248-residue protein sequence, read N- to C-terminus: 4-hydroxy-tetrahydrodipicolinate reductase (248 aa).

NAD(+) contacts are provided by residues 74 to 76 (GTT) and 99 to 102 (SANF). Histidine 134 serves as the catalytic Proton donor/acceptor. Histidine 135 lines the (S)-2,3,4,5-tetrahydrodipicolinate pocket. Lysine 138 serves as the catalytic Proton donor. 144–145 (GT) is a (S)-2,3,4,5-tetrahydrodipicolinate binding site.

Belongs to the DapB family.

It is found in the cytoplasm. The enzyme catalyses (S)-2,3,4,5-tetrahydrodipicolinate + NAD(+) + H2O = (2S,4S)-4-hydroxy-2,3,4,5-tetrahydrodipicolinate + NADH + H(+). It catalyses the reaction (S)-2,3,4,5-tetrahydrodipicolinate + NADP(+) + H2O = (2S,4S)-4-hydroxy-2,3,4,5-tetrahydrodipicolinate + NADPH + H(+). It functions in the pathway amino-acid biosynthesis; L-lysine biosynthesis via DAP pathway; (S)-tetrahydrodipicolinate from L-aspartate: step 4/4. Catalyzes the conversion of 4-hydroxy-tetrahydrodipicolinate (HTPA) to tetrahydrodipicolinate. This is 4-hydroxy-tetrahydrodipicolinate reductase from Chlorobium phaeobacteroides (strain BS1).